Consider the following 155-residue polypeptide: UPF0178 protein Amet_2995 (155 aa).

It belongs to the UPF0178 family.

This chain is UPF0178 protein Amet_2995, found in Alkaliphilus metalliredigens (strain QYMF).